Reading from the N-terminus, the 314-residue chain is Methionyl-tRNA formyltransferase (314 aa).

S110 to P113 contacts (6S)-5,6,7,8-tetrahydrofolate.

Belongs to the Fmt family.

The enzyme catalyses L-methionyl-tRNA(fMet) + (6R)-10-formyltetrahydrofolate = N-formyl-L-methionyl-tRNA(fMet) + (6S)-5,6,7,8-tetrahydrofolate + H(+). Functionally, attaches a formyl group to the free amino group of methionyl-tRNA(fMet). The formyl group appears to play a dual role in the initiator identity of N-formylmethionyl-tRNA by promoting its recognition by IF2 and preventing the misappropriation of this tRNA by the elongation apparatus. The chain is Methionyl-tRNA formyltransferase from Bacillus cereus (strain G9842).